A 163-amino-acid chain; its full sequence is Crossover junction endodeoxyribonuclease RuvC (163 aa).

Catalysis depends on residues D7, E67, and D140. Positions 7, 67, and 140 each coordinate Mg(2+).

It belongs to the RuvC family. As to quaternary structure, homodimer which binds Holliday junction (HJ) DNA. The HJ becomes 2-fold symmetrical on binding to RuvC with unstacked arms; it has a different conformation from HJ DNA in complex with RuvA. In the full resolvosome a probable DNA-RuvA(4)-RuvB(12)-RuvC(2) complex forms which resolves the HJ. Requires Mg(2+) as cofactor.

It is found in the cytoplasm. It catalyses the reaction Endonucleolytic cleavage at a junction such as a reciprocal single-stranded crossover between two homologous DNA duplexes (Holliday junction).. The RuvA-RuvB-RuvC complex processes Holliday junction (HJ) DNA during genetic recombination and DNA repair. Endonuclease that resolves HJ intermediates. Cleaves cruciform DNA by making single-stranded nicks across the HJ at symmetrical positions within the homologous arms, yielding a 5'-phosphate and a 3'-hydroxyl group; requires a central core of homology in the junction. The consensus cleavage sequence is 5'-(A/T)TT(C/G)-3'. Cleavage occurs on the 3'-side of the TT dinucleotide at the point of strand exchange. HJ branch migration catalyzed by RuvA-RuvB allows RuvC to scan DNA until it finds its consensus sequence, where it cleaves and resolves the cruciform DNA. The chain is Crossover junction endodeoxyribonuclease RuvC from Desulforamulus reducens (strain ATCC BAA-1160 / DSM 100696 / MI-1) (Desulfotomaculum reducens).